The chain runs to 493 residues: Cobyric acid synthase (493 aa).

Residues 246 to 440 (PIDIAVIKMP…IHGVFDGVSF (195 aa)) form the GATase cobBQ-type domain. C326 functions as the Nucleophile in the catalytic mechanism. Residue H432 is part of the active site.

Belongs to the CobB/CobQ family. CobQ subfamily.

It functions in the pathway cofactor biosynthesis; adenosylcobalamin biosynthesis. In terms of biological role, catalyzes amidations at positions B, D, E, and G on adenosylcobyrinic A,C-diamide. NH(2) groups are provided by glutamine, and one molecule of ATP is hydrogenolyzed for each amidation. The polypeptide is Cobyric acid synthase (Clostridium botulinum (strain Langeland / NCTC 10281 / Type F)).